Here is a 640-residue protein sequence, read N- to C-terminus: 1,4-alpha-glucan branching enzyme GlgB (640 aa).

Asp318 serves as the catalytic Nucleophile. Catalysis depends on Glu371, which acts as the Proton donor.

Belongs to the glycosyl hydrolase 13 family. GlgB subfamily. Monomer.

The catalysed reaction is Transfers a segment of a (1-&gt;4)-alpha-D-glucan chain to a primary hydroxy group in a similar glucan chain.. It functions in the pathway glycan biosynthesis; glycogen biosynthesis. Catalyzes the formation of the alpha-1,6-glucosidic linkages in glycogen by scission of a 1,4-alpha-linked oligosaccharide from growing alpha-1,4-glucan chains and the subsequent attachment of the oligosaccharide to the alpha-1,6 position. The polypeptide is 1,4-alpha-glucan branching enzyme GlgB (Francisella tularensis subsp. mediasiatica (strain FSC147)).